Reading from the N-terminus, the 343-residue chain is Methionine synthase (343 aa).

Zn(2+)-binding residues include His211, Cys213, Glu236, and Cys315.

This sequence belongs to the archaeal MetE family. The cofactor is Zn(2+).

It participates in amino-acid biosynthesis; L-methionine biosynthesis via de novo pathway. Its function is as follows. Catalyzes the transfer of a methyl group to L-homocysteine resulting in methionine formation. The physiological methyl donor is unknown. The sequence is that of Methionine synthase from Thermoplasma acidophilum (strain ATCC 25905 / DSM 1728 / JCM 9062 / NBRC 15155 / AMRC-C165).